Reading from the N-terminus, the 269-residue chain is 4-hydroxy-tetrahydrodipicolinate reductase (269 aa).

NAD(+) is bound by residues 13–18 and Asp39; that span reads GASGRM. Arg40 lines the NADP(+) pocket. NAD(+) is bound by residues 101–103 and 125–128; these read GTT and APNM. His158 (proton donor/acceptor) is an active-site residue. His159 is a (S)-2,3,4,5-tetrahydrodipicolinate binding site. Residue Lys162 is the Proton donor of the active site. (S)-2,3,4,5-tetrahydrodipicolinate is bound at residue 168–169; it reads GT.

This sequence belongs to the DapB family.

The protein resides in the cytoplasm. The enzyme catalyses (S)-2,3,4,5-tetrahydrodipicolinate + NAD(+) + H2O = (2S,4S)-4-hydroxy-2,3,4,5-tetrahydrodipicolinate + NADH + H(+). It carries out the reaction (S)-2,3,4,5-tetrahydrodipicolinate + NADP(+) + H2O = (2S,4S)-4-hydroxy-2,3,4,5-tetrahydrodipicolinate + NADPH + H(+). It participates in amino-acid biosynthesis; L-lysine biosynthesis via DAP pathway; (S)-tetrahydrodipicolinate from L-aspartate: step 4/4. In terms of biological role, catalyzes the conversion of 4-hydroxy-tetrahydrodipicolinate (HTPA) to tetrahydrodipicolinate. This chain is 4-hydroxy-tetrahydrodipicolinate reductase, found in Bordetella pertussis (strain Tohama I / ATCC BAA-589 / NCTC 13251).